A 602-amino-acid chain; its full sequence is SAGA complex subunit SPT8 (602 aa).

Positions 1 to 141 (MDEVDDILIN…REASSSTHEA (141 aa)) are disordered. 2 stretches are compositionally biased toward acidic residues: residues 14–23 (VDDEEDDEEM) and 36–75 (EGND…DGED). At Thr85 the chain carries Phosphothreonine. A phosphoserine mark is found at Ser108, Ser123, and Ser131. WD repeat units lie at residues 173–212 (PIQT…EGKL) and 305–346 (GHTQ…NEFK). The disordered stretch occupies residues 366–418 (VSGNVNSGKENENADDDMDSLFGDEDEDEKQDAGNEPVETGDGSNGEENKEQI). Residues 378–395 (NADDDMDSLFGDEDEDEK) are compositionally biased toward acidic residues. WD repeat units lie at residues 415-454 (KEQI…SPAL), 506-544 (SISG…DASN), and 560-600 (HHGG…YDID). Position 451 is a phosphoserine (Ser451).

This sequence belongs to the WD repeat SPT8 family. As to quaternary structure, component of the 1.8 MDa SAGA (Spt-Ada-Gcn5 acetyltransferase) complex, which is composed of 19 subunits TRA1, SPT7, TAF5, NGG1/ADA3, SGF73, SPT20/ADA5, SPT8, TAF12, TAF6, HFI1/ADA1, UBP8, GCN5, ADA2, SPT3, SGF29, TAF10, TAF9, SGF11 and SUS1. The SAGA complex is composed of 4 modules, namely the HAT (histone acetyltransferase) module (GCN5, ADA2, NGG1/ADA3 and SGF29), the DUB (deubiquitinating) module (UBP8, SGF11, SGF73 and SUS1), the core or TAF (TBP-associated factor) module (TAF5, TAF6, TAF9, TAF10 and TAF12), and the Tra1 or SPT (Suppressor of Ty) module (TRA1, HFI1/ADA1, SPT3, SPT7, SPT8 and SPT20/ADA5). The Tra1/SPT module binds activators, the core module recruits TBP (TATA-binding protein), the HAT module contains the histone H3 acetyltransferase GCN5, and the DUB module comprises the histone H2B deubiquitinase UBP8.

The protein resides in the nucleus. Component of the transcription coactivator SAGA complex. SAGA acts as a general cofactor required for essentially all RNA polymerase II transcription. At the promoters, SAGA is required for transcription pre-initiation complex (PIC) recruitment. It influences RNA polymerase II transcriptional activity through different activities such as TBP interaction (via core/TAF module) and promoter selectivity, interaction with transcription activators (via Tra1/SPT module), and chromatin modification through histone acetylation (via HAT module) and deubiquitination (via DUB module). SAGA preferentially acetylates histones H3 (to form H3K9ac, H3K14ac, H3K18ac and H3K23ac) and H2B and deubiquitinates histone H2B. SAGA interacts with DNA via upstream activating sequences (UASs). During SAGA-mediated transcriptional inhibition, SPT3 and SPT8 prevent binding of TBP to the TATA box. The sequence is that of SAGA complex subunit SPT8 (SPT8) from Saccharomyces cerevisiae (strain ATCC 204508 / S288c) (Baker's yeast).